The following is a 247-amino-acid chain: Small ribosomal subunit protein uS2 (247 aa).

The protein belongs to the universal ribosomal protein uS2 family.

The polypeptide is Small ribosomal subunit protein uS2 (Ralstonia pickettii (strain 12J)).